We begin with the raw amino-acid sequence, 173 residues long: Photosystem I assembly protein Ycf3 (173 aa).

TPR repeat units follow at residues 35–68 (AFVY…EEDT), 72–105 (GYIL…NPRL), and 120–153 (GEKA…APNN).

The protein belongs to the Ycf3 family.

Its subcellular location is the cellular thylakoid membrane. Essential for the assembly of the photosystem I (PSI) complex. May act as a chaperone-like factor to guide the assembly of the PSI subunits. This chain is Photosystem I assembly protein Ycf3, found in Nostoc sp. (strain PCC 7120 / SAG 25.82 / UTEX 2576).